A 121-amino-acid polypeptide reads, in one-letter code: Small ribosomal subunit protein uS11 (121 aa).

The protein belongs to the universal ribosomal protein uS11 family. In terms of assembly, part of the 30S ribosomal subunit. Interacts with proteins S7 and S18. Binds to IF-3.

In terms of biological role, located on the platform of the 30S subunit, it bridges several disparate RNA helices of the 16S rRNA. Forms part of the Shine-Dalgarno cleft in the 70S ribosome. The polypeptide is Small ribosomal subunit protein uS11 (Mycoplasma pneumoniae (strain ATCC 29342 / M129 / Subtype 1) (Mycoplasmoides pneumoniae)).